The sequence spans 142 residues: Small ribosomal subunit protein uS12 (142 aa).

Residues 1-44 (MTNGKYAARKLKKDRQQRRWSDSEYARRERGLGKKSDPLEGAPQ) form a disordered region. Over residues 7–16 (AARKLKKDRQ) the composition is skewed to basic residues. A compositionally biased stretch (basic and acidic residues) spans 17-38 (QRRWSDSEYARRERGLGKKSDP).

It belongs to the universal ribosomal protein uS12 family. As to quaternary structure, part of the 30S ribosomal subunit.

In terms of biological role, with S4 and S5 plays an important role in translational accuracy. Located at the interface of the 30S and 50S subunits. This chain is Small ribosomal subunit protein uS12, found in Halobacterium salinarum (strain ATCC 29341 / DSM 671 / R1).